Consider the following 54-residue polypeptide: Large ribosomal subunit protein bL33B (54 aa).

This sequence belongs to the bacterial ribosomal protein bL33 family.

In Myxococcus xanthus (strain DK1622), this protein is Large ribosomal subunit protein bL33B.